A 380-amino-acid chain; its full sequence is Cytochrome b (380 aa).

A run of 4 helical transmembrane segments spans residues 34-54 (FGSL…LLAM), 78-99 (WLIR…FLHI), 114-134 (WNTG…GYVL), and 179-199 (FFAL…THLM). Positions 84 and 98 each coordinate heme b. Positions 183 and 197 each coordinate heme b. His-202 provides a ligand contact to a ubiquinone. A run of 4 helical transmembrane segments spans residues 227 to 247 (LKDI…ALFS), 289 to 309 (LGGV…PFLH), 321 to 341 (LSQA…WVGS), and 348 to 368 (FIII…SLLP).

The protein belongs to the cytochrome b family. As to quaternary structure, the cytochrome bc1 complex contains 11 subunits: 3 respiratory subunits (MT-CYB, CYC1 and UQCRFS1), 2 core proteins (UQCRC1 and UQCRC2) and 6 low-molecular weight proteins (UQCRH/QCR6, UQCRB/QCR7, UQCRQ/QCR8, UQCR10/QCR9, UQCR11/QCR10 and a cleavage product of UQCRFS1). This cytochrome bc1 complex then forms a dimer. Requires heme b as cofactor.

It localises to the mitochondrion inner membrane. In terms of biological role, component of the ubiquinol-cytochrome c reductase complex (complex III or cytochrome b-c1 complex) that is part of the mitochondrial respiratory chain. The b-c1 complex mediates electron transfer from ubiquinol to cytochrome c. Contributes to the generation of a proton gradient across the mitochondrial membrane that is then used for ATP synthesis. In Crossoptilon crossoptilon (White-eared pheasant), this protein is Cytochrome b (MT-CYB).